The chain runs to 513 residues: Tryptophan--tRNA ligase 1 (513 aa).

Residues P86–H94 carry the 'HIGH' region motif. The 'KMSKS' region motif lies at K393–S397.

The protein belongs to the class-I aminoacyl-tRNA synthetase family.

It localises to the cytoplasm. The catalysed reaction is tRNA(Trp) + L-tryptophan + ATP = L-tryptophyl-tRNA(Trp) + AMP + diphosphate + H(+). The protein is Tryptophan--tRNA ligase 1 of Halobacterium salinarum (strain ATCC 700922 / JCM 11081 / NRC-1) (Halobacterium halobium).